Here is a 127-residue protein sequence, read N- to C-terminus: Small ribosomal subunit protein uS13 (127 aa).

Belongs to the universal ribosomal protein uS13 family. In terms of assembly, part of the 30S ribosomal subunit. Forms a loose heterodimer with protein S19. Forms two bridges to the 50S subunit in the 70S ribosome.

In terms of biological role, located at the top of the head of the 30S subunit, it contacts several helices of the 16S rRNA. In the 70S ribosome it contacts the 23S rRNA (bridge B1a) and protein L5 of the 50S subunit (bridge B1b), connecting the 2 subunits; these bridges are implicated in subunit movement. Contacts the tRNAs in the A and P-sites. This is Small ribosomal subunit protein uS13 from Pelagibacter ubique (strain HTCC1062).